Reading from the N-terminus, the 244-residue chain is Mono-ADP-ribosyltransferase C3 (244 aa).

An N-terminal signal peptide occupies residues 1–40; sequence MKGIRKSILCLVLSAGVIAPVTTSIVQSPQKCYACTVDKG. The region spanning 44 to 244 is the TR mART core domain; it reads DTFTEFTNVE…QIMITAMIFK (201 aa). NAD(+)-binding positions include Thr-80, Asn-87, Arg-91, 128–131, and 167–169; these read RGDD and RTE. The active site involves Arg-128. Ser-174 is an active-site residue. NAD(+)-binding positions include 182 to 185 and 211 to 213; these read FGGR and QLE. Glu-213 is an active-site residue.

To exoenzymes 3 of C.limosum and C.botulinum D phage, and to S.aureus ediN. In terms of assembly, monomer.

It localises to the secreted. It catalyses the reaction L-asparaginyl-[protein] + NAD(+) = N(4)-(ADP-D-ribosyl)-L-asparaginyl-[protein] + nicotinamide + H(+). In terms of biological role, ADP-ribosylates eukaryotic Rho and Rac proteins on an asparagine residue. In Clostridium botulinum C phage (Clostridium botulinum C bacteriophage), this protein is Mono-ADP-ribosyltransferase C3.